We begin with the raw amino-acid sequence, 465 residues long: GTPase Der (465 aa).

EngA-type G domains are found at residues 3 to 167 (PLVA…PEEG) and 179 to 352 (VRIA…ASAT). Residues 9-16 (GRPNVGKS), 57-61 (DTGGI), 119-122 (NKID), 185-192 (GRPNVGKS), 232-236 (DTAGL), and 297-300 (NKWD) contribute to the GTP site. A KH-like domain is found at 353–437 (HEFSTSEVNQ…PVCFIFREGA (85 aa)).

Belongs to the TRAFAC class TrmE-Era-EngA-EngB-Septin-like GTPase superfamily. EngA (Der) GTPase family. Associates with the 50S ribosomal subunit.

Functionally, GTPase that plays an essential role in the late steps of ribosome biogenesis. This Xanthomonas oryzae pv. oryzae (strain MAFF 311018) protein is GTPase Der.